The following is a 114-amino-acid chain: Putative pterin-4-alpha-carbinolamine dehydratase (114 aa).

The protein belongs to the pterin-4-alpha-carbinolamine dehydratase family.

It catalyses the reaction (4aS,6R)-4a-hydroxy-L-erythro-5,6,7,8-tetrahydrobiopterin = (6R)-L-erythro-6,7-dihydrobiopterin + H2O. In Methylococcus capsulatus (strain ATCC 33009 / NCIMB 11132 / Bath), this protein is Putative pterin-4-alpha-carbinolamine dehydratase.